The following is an 87-amino-acid chain: UPF0335 protein Meso_3367 (87 aa).

The protein belongs to the UPF0335 family.

In Chelativorans sp. (strain BNC1), this protein is UPF0335 protein Meso_3367.